A 146-amino-acid polypeptide reads, in one-letter code: Transmembrane protein 207 (146 aa).

A signal peptide spans 1–29 (MSRSRLFSVTSAISTIGILCLPLFQLVLS). Residues 52–72 (IWILLLLVLVAALLCGAVVLC) traverse the membrane as a helical segment.

As to quaternary structure, interacts with WWOX. As to expression, expressed in some signet-ring cell carcinoma, especially those showing high invasion and metastatic activity (at protein level).

It is found in the membrane. The protein is Transmembrane protein 207 (TMEM207) of Homo sapiens (Human).